Consider the following 872-residue polypeptide: DNA mismatch repair protein MutS (872 aa).

An ATP-binding site is contributed by 623-630; the sequence is GPNMAGKS.

Belongs to the DNA mismatch repair MutS family.

Functionally, this protein is involved in the repair of mismatches in DNA. It is possible that it carries out the mismatch recognition step. This protein has a weak ATPase activity. The protein is DNA mismatch repair protein MutS of Trichlorobacter lovleyi (strain ATCC BAA-1151 / DSM 17278 / SZ) (Geobacter lovleyi).